The following is an 88-amino-acid chain: LYR motif-containing protein 2 (88 aa).

The transit peptide at 1–19 (MAASRLPPATLTLKQFVRR) directs the protein to the mitochondrion.

Belongs to the complex I LYR family.

The protein localises to the mitochondrion. In terms of biological role, involved in efficient integration of the N-module into mitochondrial respiratory chain complex I. This chain is LYR motif-containing protein 2 (LYRM2), found in Pongo abelii (Sumatran orangutan).